Consider the following 584-residue polypeptide: Isopropyl malate synthase htyA (584 aa).

A Pyruvate carboxyltransferase domain is found at 39-317; sequence PIWLSTDLRD…ETGLDFSNLP (279 aa).

The protein belongs to the alpha-IPM synthase/homocitrate synthase family. LeuA type 2 subfamily.

It catalyses the reaction 3-methyl-2-oxobutanoate + acetyl-CoA + H2O = (2S)-2-isopropylmalate + CoA + H(+). It participates in antifungal biosynthesis. Isopropyl malate synthase; part of the gene cluster that mediates the de novo generation of L-homotyrosine from acetyl-CoA and 4-hydroxyphenyl-pyruvate. L-homotyrosine is a building block of echinocandin B, a fungal lipidated cyclic hexapeptide that acts as an antifungal agent. L-homotyrosine 4-hydroxyphenyl-pyruvate first undergoes an aldol-type condensation by htyA with the C-2 of acetyl-CoA followed by the release of CoA to form 2-(4-hydroxybenzyl)-malate. This is followed by isomerization of 2-(4-hydroxy-benzyl)-malate to 3-(4-hydroxybenzyl)-malate by htyD. Thereafter, 3-(4-hydroxybenzyl)-malate undergoes decarboxylation and oxidation to form 2-oxo-4-(4-hydroxybenzyl)butanoic acid, coupled to reduction of NAD(+) to NADH by htyC. The product then undergoes transamination catalyzed by htyB to form L-homotyrosine. This Aspergillus rugulosus (Emericella rugulosa) protein is Isopropyl malate synthase htyA.